Consider the following 279-residue polypeptide: Putative pyruvate, phosphate dikinase regulatory protein (279 aa).

152–159 (GVSRTSKS) is an ADP binding site.

Belongs to the pyruvate, phosphate/water dikinase regulatory protein family. PDRP subfamily.

The enzyme catalyses N(tele)-phospho-L-histidyl/L-threonyl-[pyruvate, phosphate dikinase] + ADP = N(tele)-phospho-L-histidyl/O-phospho-L-threonyl-[pyruvate, phosphate dikinase] + AMP + H(+). The catalysed reaction is N(tele)-phospho-L-histidyl/O-phospho-L-threonyl-[pyruvate, phosphate dikinase] + phosphate + H(+) = N(tele)-phospho-L-histidyl/L-threonyl-[pyruvate, phosphate dikinase] + diphosphate. In terms of biological role, bifunctional serine/threonine kinase and phosphorylase involved in the regulation of the pyruvate, phosphate dikinase (PPDK) by catalyzing its phosphorylation/dephosphorylation. The sequence is that of Putative pyruvate, phosphate dikinase regulatory protein from Anaplasma marginale (strain Florida).